Consider the following 243-residue polypeptide: Carboxy-S-adenosyl-L-methionine synthase (243 aa).

S-adenosyl-L-methionine is bound by residues Tyr-40, 65–67 (GCS), 90–91 (DN), 118–119 (DI), Asn-133, and Arg-200.

The protein belongs to the class I-like SAM-binding methyltransferase superfamily. Cx-SAM synthase family. As to quaternary structure, homodimer.

The catalysed reaction is prephenate + S-adenosyl-L-methionine = carboxy-S-adenosyl-L-methionine + 3-phenylpyruvate + H2O. Its function is as follows. Catalyzes the conversion of S-adenosyl-L-methionine (SAM) to carboxy-S-adenosyl-L-methionine (Cx-SAM). This is Carboxy-S-adenosyl-L-methionine synthase from Shewanella halifaxensis (strain HAW-EB4).